A 701-amino-acid polypeptide reads, in one-letter code: Arachidonate 12-lipoxygenase, 12R-type (701 aa).

Residues 2-119 enclose the PLAT domain; it reads ATYKVKVATG…TLALREATGK (118 aa). In terms of domain architecture, Lipoxygenase spans 120–701; it reads ITADDTLPIL…PVLIENSISI (582 aa). Fe cation-binding residues include H398, H403, H578, N582, and I701.

It belongs to the lipoxygenase family. It depends on Fe cation as a cofactor. Expressed in skin epidermis and other stratified epithelia including tongue and forestomach. Low levels of expression are found in trachea, brain and lung. Not expressed in intestine, liver, kidney, adipose tissue, muscle or hematopoietic cells.

The protein localises to the cytoplasm. Its subcellular location is the perinuclear region. The enzyme catalyses 1-O-methyl-(5Z,8Z,11Z,14Z)-eicosatetraenoate + O2 = 1-O-methyl (5Z,8Z,10E,12R,14Z)-hydroperoxyiecosatetraenoate. It carries out the reaction 1-O-methyl-(5Z,8Z,11Z,14Z)-eicosatetraenoate + O2 = 1-O-methyl-8-hydroperoxy-(5Z,9E,11Z,14Z)-eicosatetraenoate. The catalysed reaction is (5Z,8Z,11Z,14Z)-eicosatetraenoate + O2 = (12R)-hydroperoxy-(5Z,8Z,10E,14Z)-eicosatetraenoate. It catalyses the reaction N-[omega-(9Z,12Z)-octadecadienoyloxy]acyl-beta-D-glucosyl-(1&lt;-&gt;1)-octadecasphing-4E-enine + O2 = N-[omega-(9R)-hydroperoxy-(10E,12Z)-octadecadienoyloxy]acyl-beta-D-glucosyl-(1&lt;-&gt;1)-octadecasphing-4E-enine. The enzyme catalyses a N-[omega-(9Z,12Z)-octadecadienoyloxy]-acylsphin-4E-enine + O2 = a N-[omega-(9R)-hydroperoxy-(10E,12Z)-octadecadienoyloxy]-acylsphin-4E-enine. It carries out the reaction (6Z,9Z,12Z)-octadecatrienoate + O2 = 10-hydroperoxy-(6Z,8E,12Z)-octadecatrienoate. The catalysed reaction is (4Z,7Z,10Z,13Z,16Z,19Z)-docosahexaenoate + O2 = 14-hydroperoxy-(4Z,7Z,10Z,12E,16Z,19Z)-docosahexaenoate. It catalyses the reaction (8Z,11Z,14Z)-eicosatrienoate + O2 = (8Z,10E,14Z)-12-hydroperoxyeicosatrienoate. The enzyme catalyses (5Z,8Z,11Z,14Z,17Z)-eicosapentaenoate + O2 = (5Z,7Z,8Z,10E,14Z,17Z)-12-hydroperoxyeicosapentaenoate. It carries out the reaction (6Z,9Z,12Z)-octadecatrienoate + O2 = 10R-hydroperoxy-(6Z,8E,12Z)-octadecatrienoate. The catalysed reaction is 1-O-methyl-(5Z,8Z,11Z,14Z)-eicosatetraenoate + O2 = 1-O-methyl-(8R)-hydroperoxy-(5Z,9E,11Z,14Z)-eicosatrienoate. It catalyses the reaction 1-O-methyl-(9Z,12Z)-octadecadienoate + O2 = 1-O-methyl-(9R)-hydroperoxy-(10E,12Z)-octadecadienoate. The enzyme catalyses 1-O-methyl-20-hydroxy-(5Z,8Z,11Z,14Z)-eicosatetraenoate + O2 = 1-O-methyl-8-hydroperoxy-20-hydroxy-(5Z,9E,11Z,14Z)-eicosatetraenoate. It carries out the reaction 1-O-methyl-20-hydroxy-(5Z,8Z,11Z,14Z)-eicosatetraenoate + O2 = 1-O-methyl-12-hydroperoxy-20-hydroxy-(5Z,8Z,10E,14Z)-eicosatetraenoate. The catalysed reaction is 1-O-methyl-20-hydroxy-(5Z,8Z,11Z,14Z)-eicosatetraenoate + O2 = 1-O-methyl-9-hydroperoxy-20-hydroxy-(5Z,7E,11Z,14Z)-eicosatetraenoate. It catalyses the reaction 1-O-methyl-(9Z,12Z)-octadecadienoate + O2 = 1-O-methyl-(13S)-hydroperoxy-(9Z,11E)-octadecadienoate. Its pathway is lipid metabolism; hydroperoxy eicosatetraenoic acid biosynthesis. The protein operates within lipid metabolism; sphingolipid metabolism. With respect to regulation, increased by calcium. In terms of biological role, catalyzes the regio and stereo-specific incorporation of a single molecule of dioxygen into free and esterified polyunsaturated fatty acids generating lipid hydroperoxides that can be further reduced to the corresponding hydroxy species. Does not convert arachidonic acid to (12R)-hydroperoxyeicosatetraenoic acid/(12R)-HPETE. In the skin, acts upstream of ALOXE3 on the lineolate moiety of esterified omega-hydroxyacyl-sphingosine (EOS) ceramides to produce an epoxy-ketone derivative, a crucial step in the conjugation of omega-hydroxyceramide to membrane proteins. Therefore plays a crucial role in the synthesis of corneocytes lipid envelope and the establishment of the skin barrier to water loss. May also play a role in the regulation of the expression of airway mucins. The chain is Arachidonate 12-lipoxygenase, 12R-type from Mus musculus (Mouse).